The following is a 159-amino-acid chain: Phosphopantetheine adenylyltransferase (159 aa).

Position 8 (serine 8) interacts with substrate. ATP-binding positions include 8–9 (SF) and histidine 16. 3 residues coordinate substrate: lysine 40, threonine 72, and arginine 86. ATP contacts are provided by residues 87–89 (GLR), glutamate 97, and 122–128 (YSFLSSS).

It belongs to the bacterial CoaD family. In terms of assembly, homohexamer. It depends on Mg(2+) as a cofactor.

It localises to the cytoplasm. The catalysed reaction is (R)-4'-phosphopantetheine + ATP + H(+) = 3'-dephospho-CoA + diphosphate. It functions in the pathway cofactor biosynthesis; coenzyme A biosynthesis; CoA from (R)-pantothenate: step 4/5. Its function is as follows. Reversibly transfers an adenylyl group from ATP to 4'-phosphopantetheine, yielding dephospho-CoA (dPCoA) and pyrophosphate. This Synechocystis sp. (strain ATCC 27184 / PCC 6803 / Kazusa) protein is Phosphopantetheine adenylyltransferase.